The following is a 747-amino-acid chain: Phenylalanine ammonia-lyase 2 (747 aa).

Positions 1 to 20 are enriched in polar residues; it reads MTILSGTTAAPRVNGTTMNG. A disordered region spans residues 1–47; sequence MTILSGTTAAPRVNGTTMNGHSKPHTNGVHLNGHAPKATTESPWPQS. Catalysis depends on Tyr-124, which acts as the Proton donor/acceptor. The segment at residues 229–231 is a cross-link (5-imidazolinone (Ala-Gly)); that stretch reads ASG. Ser-230 is subject to 2,3-didehydroalanine (Ser). (E)-cinnamate is bound by residues Asn-290, Gln-380, Arg-386, Asn-416, Lys-487, Glu-515, and Asn-518.

It belongs to the PAL/histidase family. In terms of assembly, homotetramer. Post-translationally, contains an active site 4-methylidene-imidazol-5-one (MIO), which is formed autocatalytically by cyclization and dehydration of residues Ala-Ser-Gly.

It is found in the cytoplasm. It carries out the reaction L-phenylalanine = (E)-cinnamate + NH4(+). Its pathway is phenylpropanoid metabolism; trans-cinnamate biosynthesis; trans-cinnamate from L-phenylalanine: step 1/1. In terms of biological role, catalyzes the non-oxidative deamination of L-phenylalanine to form trans-cinnamic acid and a free ammonium ion. Facilitates the commitment step in phenylpropanoid pathways that produce secondary metabolites such as lignins, coumarins and flavonoids. In Pleurotus ostreatus (Oyster mushroom), this protein is Phenylalanine ammonia-lyase 2.